The sequence spans 569 residues: MQIDKTAELNLLWGTLILEELSRLGVQHVCMAPGSRSTPLTLAAAKQSKLKQHLHFDERGLGFMALGLAKTSHAPVAIITTSGTAVANLYPAIIEAWLTQVPLVVLSGDRPPELIDCGANQAIIQPALFAQYAKQINLPTPDIAIRPEALLTMLDEAISNQSLPVHINCMFREPLYPSTMSADFTQYLSTLGNWQHTTSPFNQYGKTSQHSLPTQDSLARFVHGKGVIIAGTLSPQESPEILVELSQKLGWPLLTDAQSQLRQHSGVIGNVDQLLHQPKARALLAQAESVLVFGGRLLSKRLINFLSEQKWKRYWQVLPQQMRLDPSHSAKQVWHSSVAAFASQAWPRSSDANWALQLIQFNDGLETLFQQQIDNAEFGEAMVVRAIAKAQNRQSQLFIGNSLPVRLYDMYAPITPDYPRTYTNRGASGIDGLLATACGVAKHEGKATTLLIGDISQLHDLNSLAIARTIESPFVIVILNNDGGNIFNLLPVPDEKLRSDYYRLAHGLEFGYGAAMFGLAYNRVDDFESFNEAYQEAIAFQGPSVIEVSVAQHQASEQIASIATWVKQS.

This sequence belongs to the TPP enzyme family. MenD subfamily. As to quaternary structure, homodimer. It depends on Mg(2+) as a cofactor. Mn(2+) serves as cofactor. Thiamine diphosphate is required as a cofactor.

It carries out the reaction isochorismate + 2-oxoglutarate + H(+) = 5-enolpyruvoyl-6-hydroxy-2-succinyl-cyclohex-3-ene-1-carboxylate + CO2. The protein operates within quinol/quinone metabolism; 1,4-dihydroxy-2-naphthoate biosynthesis; 1,4-dihydroxy-2-naphthoate from chorismate: step 2/7. Its pathway is quinol/quinone metabolism; menaquinone biosynthesis. Functionally, catalyzes the thiamine diphosphate-dependent decarboxylation of 2-oxoglutarate and the subsequent addition of the resulting succinic semialdehyde-thiamine pyrophosphate anion to isochorismate to yield 2-succinyl-5-enolpyruvyl-6-hydroxy-3-cyclohexene-1-carboxylate (SEPHCHC). The protein is 2-succinyl-5-enolpyruvyl-6-hydroxy-3-cyclohexene-1-carboxylate synthase of Shewanella sediminis (strain HAW-EB3).